Consider the following 479-residue polypeptide: ATP-dependent protease ATPase subunit HslU (479 aa).

ATP-binding positions include Ile32, 74 to 79, Asp290, Glu355, and Arg427; that span reads GVGKTE.

It belongs to the ClpX chaperone family. HslU subfamily. In terms of assembly, a double ring-shaped homohexamer of HslV is capped on each side by a ring-shaped HslU homohexamer. The assembly of the HslU/HslV complex is dependent on binding of ATP.

The protein localises to the cytoplasm. Its function is as follows. ATPase subunit of a proteasome-like degradation complex; this subunit has chaperone activity. The binding of ATP and its subsequent hydrolysis by HslU are essential for unfolding of protein substrates subsequently hydrolyzed by HslV. HslU recognizes the N-terminal part of its protein substrates and unfolds these before they are guided to HslV for hydrolysis. This is ATP-dependent protease ATPase subunit HslU from Leptospira interrogans serogroup Icterohaemorrhagiae serovar Lai (strain 56601).